We begin with the raw amino-acid sequence, 702 residues long: Arginine decarboxylase 1 (702 aa).

Residue Lys151 is modified to N6-(pyridoxal phosphate)lysine. Substrate is bound at residue 336–346; it reads IDVGGGLGIDY. Residues 668–686 show a composition bias toward low complexity; the sequence is ASGESSGMSSDSEGSAAGA. The segment at 668 to 702 is disordered; it reads ASGESSGMSSDSEGSAAGAAEEDDDEWEFMRGLTV.

It belongs to the Orn/Lys/Arg decarboxylase class-II family. SpeA subfamily. The cofactor is pyridoxal 5'-phosphate. It depends on Mg(2+) as a cofactor. In terms of tissue distribution, expressed in roots, leaves and stems (at protein level).

It catalyses the reaction L-arginine + H(+) = agmatine + CO2. It functions in the pathway amine and polyamine biosynthesis; agmatine biosynthesis; agmatine from L-arginine: step 1/1. This is Arginine decarboxylase 1 (ADC1) from Oryza sativa subsp. japonica (Rice).